Reading from the N-terminus, the 77-residue chain is Large ribosomal subunit protein eL20 (77 aa).

Belongs to the eukaryotic ribosomal protein eL20 family. As to quaternary structure, part of the 50S ribosomal subunit. Binds 23S rRNA.

In Pyrococcus horikoshii (strain ATCC 700860 / DSM 12428 / JCM 9974 / NBRC 100139 / OT-3), this protein is Large ribosomal subunit protein eL20.